Reading from the N-terminus, the 277-residue chain is Diaminopimelate epimerase (277 aa).

Residues Asn13, Gln46, and Asn66 each coordinate substrate. The active-site Proton donor is Cys75. Residues 76–77 (GN), Asn159, Asn192, and 210–211 (ER) contribute to the substrate site. The Proton acceptor role is filled by Cys219. Substrate is bound at residue 220–221 (GT).

This sequence belongs to the diaminopimelate epimerase family. In terms of assembly, homodimer.

It localises to the cytoplasm. It catalyses the reaction (2S,6S)-2,6-diaminopimelate = meso-2,6-diaminopimelate. Its pathway is amino-acid biosynthesis; L-lysine biosynthesis via DAP pathway; DL-2,6-diaminopimelate from LL-2,6-diaminopimelate: step 1/1. Its function is as follows. Catalyzes the stereoinversion of LL-2,6-diaminopimelate (L,L-DAP) to meso-diaminopimelate (meso-DAP), a precursor of L-lysine and an essential component of the bacterial peptidoglycan. The sequence is that of Diaminopimelate epimerase from Azoarcus sp. (strain BH72).